We begin with the raw amino-acid sequence, 139 residues long: mRNA stability protein mug134 (139 aa).

The tract at residues 83-139 (IGKEIPSPDTIPHRVVSAGSPNKEPSLHTKRPSESSPSGASSRRESVTRHDLESNEN) is disordered. Positions 124-139 (SRRESVTRHDLESNEN) are enriched in basic and acidic residues.

The protein belongs to the endosulfine family.

Its subcellular location is the nucleus. It is found in the cytoplasm. Plays an essential role in initiation of the G0 program by preventing the degradation of specific nutrient-regulated mRNAs via the 5'-3' mRNA decay pathway. The chain is mRNA stability protein mug134 (mug134) from Schizosaccharomyces pombe (strain 972 / ATCC 24843) (Fission yeast).